Reading from the N-terminus, the 825-residue chain is Ent-copalyl diphosphate synthase 2, chloroplastic (825 aa).

A chloroplast-targeting transit peptide spans 1 to 70; that stretch reads MVLSSSCTTV…KGSSLTPIVR (70 aa). Lys-241 lines the substrate pocket. Positions 373–376 match the DXDD motif motif; the sequence is EVDD. Residue Lys-459 coordinates substrate.

This sequence belongs to the terpene synthase family. Tpsc subfamily. The cofactor is Mg(2+). In terms of tissue distribution, expressed in tassels.

It is found in the plastid. It localises to the chloroplast. The enzyme catalyses (2E,6E,10E)-geranylgeranyl diphosphate = ent-copalyl diphosphate. Its pathway is plant hormone biosynthesis; gibberellin biosynthesis. In terms of biological role, involved in gibberellin biosynthesis. Catalyzes the conversion of geranylgeranyl diphosphate to the gibberellin precursor ent-copalyl diphosphate (ent-CPP). Involved in the production of antifungal dolabralexin phytoalexins in response to biotic and abiotic stresses. In response to fungal infection and in associtation with KSL4, is involved in the production dolabradiene, a type of antifungal phytoalexin. This chain is Ent-copalyl diphosphate synthase 2, chloroplastic, found in Zea mays (Maize).